Here is a 288-residue protein sequence, read N- to C-terminus: HTH-type transcriptional regulator CzcR (288 aa).

The HTH lysR-type domain maps to 1–58 (MELRDLQIFKCVAHHKSITGAAKELNYVQSNVTARIKQLENELKTPLFNRHKKGVSLS). Positions 18-37 (ITGAAKELNYVQSNVTARIK) form a DNA-binding region, H-T-H motif.

It belongs to the LysR transcriptional regulatory family.

This Bacillus subtilis (strain 168) protein is HTH-type transcriptional regulator CzcR (czcR).